The chain runs to 419 residues: Enolase (419 aa).

Residue glutamine 161 coordinates (2R)-2-phosphoglycerate. Glutamate 205 (proton donor) is an active-site residue. Positions 240, 283, and 309 each coordinate Mg(2+). Positions 334, 363, 364, and 385 each coordinate (2R)-2-phosphoglycerate. Lysine 334 serves as the catalytic Proton acceptor.

The protein belongs to the enolase family. Requires Mg(2+) as cofactor.

Its subcellular location is the cytoplasm. The protein localises to the secreted. It localises to the cell surface. The enzyme catalyses (2R)-2-phosphoglycerate = phosphoenolpyruvate + H2O. It functions in the pathway carbohydrate degradation; glycolysis; pyruvate from D-glyceraldehyde 3-phosphate: step 4/5. Its function is as follows. Catalyzes the reversible conversion of 2-phosphoglycerate (2-PG) into phosphoenolpyruvate (PEP). It is essential for the degradation of carbohydrates via glycolysis. The chain is Enolase from Saccharolobus solfataricus (strain ATCC 35092 / DSM 1617 / JCM 11322 / P2) (Sulfolobus solfataricus).